A 130-amino-acid polypeptide reads, in one-letter code: DNA-directed RNA polymerase subunit omega (130 aa).

Residues Glu110–Glu130 are disordered.

It belongs to the RNA polymerase subunit omega family. The RNAP catalytic core consists of 2 alpha, 1 beta, 1 beta' and 1 omega subunit. When a sigma factor is associated with the core the holoenzyme is formed, which can initiate transcription.

The enzyme catalyses RNA(n) + a ribonucleoside 5'-triphosphate = RNA(n+1) + diphosphate. In terms of biological role, promotes RNA polymerase assembly. Latches the N- and C-terminal regions of the beta' subunit thereby facilitating its interaction with the beta and alpha subunits. This chain is DNA-directed RNA polymerase subunit omega, found in Bradyrhizobium sp. (strain BTAi1 / ATCC BAA-1182).